The primary structure comprises 80 residues: UPF0154 protein SH1564 (80 aa).

A helical membrane pass occupies residues 4-24 (WLAILLIIVALIGGLVGGFFL).

It belongs to the UPF0154 family.

The protein localises to the membrane. The polypeptide is UPF0154 protein SH1564 (Staphylococcus haemolyticus (strain JCSC1435)).